The chain runs to 1262 residues: MSGQPTAVDCLESSGSTVEDVQETPASREKSYGLPVRKGENSLESPAEQAAKDVEIEELTHSEAIAATGSTRKQCPYGGKAPDEPGKLADESEDRKGENTKAIASSPVLVAVDSDSSVELIESPVKFSSANESEKDPPKPDAVNEAAAKEAEEMTDSSISSPTSESFPEKDEKTNKENEQEPPGMEVDQDVEESISRPAEEYKIENTLKGHKRISLTEIEEHKIVDKKDDVLEVELEKGTAPKAAEDEKLNALLSDGDVFYDKECVNCNCTKLHKQYVLANMATLNFYQVLRKSSKQQFLCMGCHDTAMDLYEEYAGQLMAKQPLLLKDFHQDHADFVALDSSDEEEEEKQPEKSDFSKNKLQLIEDELDDAIKNVLNKVDFTAQLSWSKTILQAKADHLERQFALADVELEKVQTTADKMHCALYNSCPVAHKHLPTLDIEPSDYVHEVPPPGEIVRPPIQLGETYYAVKNKAIASWVSIKVIEFTESTAINGNTMKSYKIRYLNTPYQMIKTVTAKHIAYFEPPPVRLTIGTRVIAYFDGTTLSRGKDKGVVQSAFYPGIIAEPLKQANRYRYLIFYDDGYTQYVPHRDVRLVCQASEKVWEDVHAASRDFIQKYVEKYSVDRPMVQCTRGQSMTTESNGTWLYARVIDIDCSLVLMQFEGDKNHTEWIYRGSLRLGPVFRETQNNMNSSSAQQLRVPRRTEPFIRYTKEMESSSKVNQQMRAFARKSSASAQNNALAAASSAATPAGGRTNAGGVSTSNSASAVRHLNNSTIYVDDENRPKGHVVYFTAKRNLPPKMYKCHECSPNCLFKIVHRLDSYSPLAKPLLSGWERLVMRQKTKKSVVYKGPCGKSLRSLAEVHRYLRATENVLNVDNFDFTPDLKCLAEYSIDPSIVKDTDISKGQEKMAIPLVNYYDNTLPPPCTYAKQRIPTEGVHLNLDEEFLLCCDCEDDCSDKSKCACWQLTVAGVRYCNPKKPIEEIGYQYKRLHEHVPTGIYECNSRCKCKKNCLNRVVQFSLEMKLQVFKTSNRGWGLRCVNDIPKGAFICIYAGHLLTETMANEGGQDAGDEYFADLDYIEVAEQLKEGYESEVDHSDPDAEEDNGGPDAEDDDDFRPNYHYQRKIKRSSRSGSTQNSSTQSSELDSQERAVINFNPNADLDETVRENSVRRLFGKDEAPYIMDAKTTGNLGRYFNHSCSPNLFVQNVFVDTHDLRFPWVAFFSAAHIRSGTELTWNYNYEVGVVPGKVLYCQCGAPNCRLRLL.

The interval 1-194 is disordered; it reads MSGQPTAVDC…MEVDQDVEES (194 aa). Composition is skewed to basic and acidic residues over residues 26–41, 50–61, and 81–99; these read ASREKSYGLPVRKGEN, AAKDVEIEELTH, and APDEPGKLADESEDRKGEN. A compositionally biased stretch (low complexity) spans 157–166; that stretch reads SSISSPTSES. Over residues 167–179 the composition is skewed to basic and acidic residues; the sequence is FPEKDEKTNKENE. Ser-215 is subject to Phosphoserine. Thr-217 is modified (phosphothreonine). Positions 353 to 420 form a coiled coil; that stretch reads EKSDFSKNKL…LEKVQTTADK (68 aa). 2 consecutive Tudor domains span residues 529–602 and 629–686; these read RLTI…SEKV and QCTR…RETQ. Positions 743–764 are disordered; sequence SSAATPAGGRTNAGGVSTSNSA. Residues 818-884 form the MBD domain; it reads LDSYSPLAKP…DNFDFTPDLK (67 aa). A Pre-SET domain is found at 946–1018; it reads LCCDCEDDCS…NCLNRVVQFS (73 aa). Zn(2+) is bound by residues Cys-948, Cys-950, Cys-954, Cys-960, Cys-962, Cys-1000, Cys-1004, Cys-1006, and Cys-1010. The 217-residue stretch at 1021–1237 folds into the SET domain; sequence MKLQVFKTSN…SGTELTWNYN (217 aa). S-adenosyl-L-methionine is bound by residues 1031 to 1033, Asp-1069, and Tyr-1071; that span reads RGW. The span at 1086-1097 shows a compositional bias: basic and acidic residues; sequence EGYESEVDHSDP. The tract at residues 1086–1148 is disordered; it reads EGYESEVDHS…QSSELDSQER (63 aa). The span at 1098-1113 shows a compositional bias: acidic residues; sequence DAEEDNGGPDAEDDDD. The segment covering 1129–1141 has biased composition (low complexity); the sequence is RSGSTQNSSTQSS. S-adenosyl-L-methionine is bound by residues Arg-1191 and 1194–1195; that span reads NH. Residues Cys-1197, Cys-1250, Cys-1252, and Cys-1257 each contribute to the Zn(2+) site. Residues 1246-1262 form the Post-SET domain; sequence KVLYCQCGAPNCRLRLL.

The protein belongs to the class V-like SAM-binding methyltransferase superfamily. Histone-lysine methyltransferase family. Suvar3-9 subfamily. In terms of tissue distribution, expressed in ovary (at protein level).

It is found in the nucleus. It localises to the chromosome. It carries out the reaction L-lysyl(9)-[histone H3] + 3 S-adenosyl-L-methionine = N(6),N(6),N(6)-trimethyl-L-lysyl(9)-[histone H3] + 3 S-adenosyl-L-homocysteine + 3 H(+). Its function is as follows. Histone methyltransferase that specifically trimethylates 'Lys-10' of histone H3 (H3K9me3) in ovary. H3K9me3 represents a specific tag for epigenetic transcriptional repression by recruiting Su(var)205/HP1 to methylated histones. Plays a central role during oogenesis. This is Histone-lysine N-methyltransferase eggless (egg) from Drosophila melanogaster (Fruit fly).